An 87-amino-acid polypeptide reads, in one-letter code: MANSAQARKRARQASAQRDHNMSQRSELRTAIKKVRKAIEAGDKAAAQAVYQSSVSVIDSIADKQIIHKNKAARHKSRLSLAVKGMA.

The segment at 1 to 28 (MANSAQARKRARQASAQRDHNMSQRSEL) is disordered. Over residues 17–28 (QRDHNMSQRSEL) the composition is skewed to basic and acidic residues.

This sequence belongs to the bacterial ribosomal protein bS20 family.

Functionally, binds directly to 16S ribosomal RNA. This chain is Small ribosomal subunit protein bS20, found in Thiobacillus denitrificans (strain ATCC 25259 / T1).